The primary structure comprises 327 residues: Ketol-acid reductoisomerase (NADP(+)) (327 aa).

Positions 2-182 (AKIYTDKDAS…GATRAGVIET (181 aa)) constitute a KARI N-terminal Rossmann domain. NADP(+) is bound by residues 25–28 (YGIQ), Arg48, Ser53, and 83–86 (DMEQ). His108 is a catalytic residue. Gly134 contributes to the NADP(+) binding site. One can recognise a KARI C-terminal knotted domain in the interval 183-327 (TFAEETETDL…GAEMRKLLFG (145 aa)). Mg(2+) contacts are provided by Asp191, Glu195, Glu227, and Glu231. A substrate-binding site is contributed by Ser252.

Belongs to the ketol-acid reductoisomerase family. It depends on Mg(2+) as a cofactor.

It catalyses the reaction (2R)-2,3-dihydroxy-3-methylbutanoate + NADP(+) = (2S)-2-acetolactate + NADPH + H(+). The catalysed reaction is (2R,3R)-2,3-dihydroxy-3-methylpentanoate + NADP(+) = (S)-2-ethyl-2-hydroxy-3-oxobutanoate + NADPH + H(+). It functions in the pathway amino-acid biosynthesis; L-isoleucine biosynthesis; L-isoleucine from 2-oxobutanoate: step 2/4. The protein operates within amino-acid biosynthesis; L-valine biosynthesis; L-valine from pyruvate: step 2/4. Involved in the biosynthesis of branched-chain amino acids (BCAA). Catalyzes an alkyl-migration followed by a ketol-acid reduction of (S)-2-acetolactate (S2AL) to yield (R)-2,3-dihydroxy-isovalerate. In the isomerase reaction, S2AL is rearranged via a Mg-dependent methyl migration to produce 3-hydroxy-3-methyl-2-ketobutyrate (HMKB). In the reductase reaction, this 2-ketoacid undergoes a metal-dependent reduction by NADPH to yield (R)-2,3-dihydroxy-isovalerate. In Pyrobaculum neutrophilum (strain DSM 2338 / JCM 9278 / NBRC 100436 / V24Sta) (Thermoproteus neutrophilus), this protein is Ketol-acid reductoisomerase (NADP(+)).